Consider the following 77-residue polypeptide: Acyl carrier protein (77 aa).

One can recognise a Carrier domain in the interval 2–77; it reads SNIEERVKKI…AAIDYVNSAQ (76 aa). Serine 37 is modified (O-(pantetheine 4'-phosphoryl)serine).

The protein belongs to the acyl carrier protein (ACP) family. Post-translationally, 4'-phosphopantetheine is transferred from CoA to a specific serine of apo-ACP by AcpS. This modification is essential for activity because fatty acids are bound in thioester linkage to the sulfhydryl of the prosthetic group.

The protein localises to the cytoplasm. It participates in lipid metabolism; fatty acid biosynthesis. Carrier of the growing fatty acid chain in fatty acid biosynthesis. This Vibrio campbellii (strain ATCC BAA-1116) protein is Acyl carrier protein.